Here is a 192-residue protein sequence, read N- to C-terminus: Holliday junction branch migration complex subunit RuvA (192 aa).

Residues 1–64 (MLGRLTGLLA…EDAQVLFGFL (64 aa)) are domain I. Residues 65 to 139 (TAPERETFRM…GKLGADLGPA (75 aa)) form a domain II region. Residues 139 to 143 (AIGGK) are flexible linker. The domain III stretch occupies residues 144-192 (PASDAQADILQALIALGYSEREAQAAVKALPAEVGVSDGIKLALKALAR).

It belongs to the RuvA family. In terms of assembly, homotetramer. Forms an RuvA(8)-RuvB(12)-Holliday junction (HJ) complex. HJ DNA is sandwiched between 2 RuvA tetramers; dsDNA enters through RuvA and exits via RuvB. An RuvB hexamer assembles on each DNA strand where it exits the tetramer. Each RuvB hexamer is contacted by two RuvA subunits (via domain III) on 2 adjacent RuvB subunits; this complex drives branch migration. In the full resolvosome a probable DNA-RuvA(4)-RuvB(12)-RuvC(2) complex forms which resolves the HJ.

Its subcellular location is the cytoplasm. Functionally, the RuvA-RuvB-RuvC complex processes Holliday junction (HJ) DNA during genetic recombination and DNA repair, while the RuvA-RuvB complex plays an important role in the rescue of blocked DNA replication forks via replication fork reversal (RFR). RuvA specifically binds to HJ cruciform DNA, conferring on it an open structure. The RuvB hexamer acts as an ATP-dependent pump, pulling dsDNA into and through the RuvAB complex. HJ branch migration allows RuvC to scan DNA until it finds its consensus sequence, where it cleaves and resolves the cruciform DNA. The polypeptide is Holliday junction branch migration complex subunit RuvA (Methylibium petroleiphilum (strain ATCC BAA-1232 / LMG 22953 / PM1)).